The chain runs to 868 residues: Metabotropic glutamate receptor 6 (868 aa).

Residues methionine 1 to alanine 20 form the signal peptide. At alanine 21 to tryptophan 576 the chain is on the extracellular side. A disulfide bridge links cysteine 48 with cysteine 90. L-glutamate contacts are provided by residues serine 145, alanine 166–threonine 168, and tyrosine 216. Intrachain disulfides connect cysteine 235-cysteine 527, cysteine 358-cysteine 374, cysteine 414-cysteine 421, cysteine 509-cysteine 528, cysteine 513-cysteine 531, cysteine 534-cysteine 546, and cysteine 549-cysteine 562. Asparagine 287 carries N-linked (GlcNAc...) asparagine glycosylation. Residue aspartate 298 participates in L-glutamate binding. Position 391 (lysine 391) interacts with L-glutamate. 2 N-linked (GlcNAc...) asparagine glycosylation sites follow: asparagine 442 and asparagine 470. N-linked (GlcNAc...) asparagine glycosylation occurs at asparagine 558. A helical membrane pass occupies residues alanine 577 to valine 599. Residues arginine 600–glutamate 613 lie on the Cytoplasmic side of the membrane. The chain crosses the membrane as a helical span at residues leucine 614–alanine 634. The Extracellular segment spans residues glutamate 635–arginine 645. Residues leucine 646–asparagine 664 traverse the membrane as a helical segment. The Cytoplasmic segment spans residues arginine 665 to glutamine 688. The chain crosses the membrane as a helical span at residues leucine 689–alanine 709. The Extracellular segment spans residues glutamine 710 to aspartate 739. Residues leucine 740–isoleucine 761 form a helical membrane-spanning segment. Topologically, residues lysine 762–lysine 774 are cytoplasmic. Residues proline 775–threonine 797 form a helical membrane-spanning segment. Residues alanine 798 to threonine 810 lie on the Extracellular side of the membrane. The helical transmembrane segment at leucine 811–phenylalanine 836 threads the bilayer. Topologically, residues histidine 837–lysine 868 are cytoplasmic. Residues arginine 845–lysine 868 are disordered.

It belongs to the G-protein coupled receptor 3 family. As to quaternary structure, homodimer. Interacts with GPR179. Interacts with photoreceptor synaptic protein LRIT1 (via its N-terminal extracellular domain).

Its subcellular location is the cell membrane. The protein resides in the endoplasmic reticulum membrane. It localises to the golgi apparatus membrane. The protein localises to the cell projection. It is found in the dendrite. Functionally, G-protein coupled receptor for glutamate. Ligand binding causes a conformation change that triggers signaling via guanine nucleotide-binding proteins (G proteins) and modulates the activity of down-stream effectors, such as adenylate cyclase. Signaling inhibits adenylate cyclase activity. Signaling stimulates TRPM1 channel activity and Ca(2+) uptake. Required for normal vision. The chain is Metabotropic glutamate receptor 6 (GRM6) from Oryctolagus cuniculus (Rabbit).